Here is a 211-residue protein sequence, read N- to C-terminus: Ribosomal RNA small subunit methyltransferase G (211 aa).

S-adenosyl-L-methionine-binding positions include Gly-73, 125–126, and Arg-141; that span reads IE.

The protein belongs to the methyltransferase superfamily. RNA methyltransferase RsmG family.

Its subcellular location is the cytoplasm. The catalysed reaction is guanosine(527) in 16S rRNA + S-adenosyl-L-methionine = N(7)-methylguanosine(527) in 16S rRNA + S-adenosyl-L-homocysteine. In terms of biological role, specifically methylates the N7 position of guanine in position 527 of 16S rRNA. The polypeptide is Ribosomal RNA small subunit methyltransferase G (Methylobacterium radiotolerans (strain ATCC 27329 / DSM 1819 / JCM 2831 / NBRC 15690 / NCIMB 10815 / 0-1)).